Reading from the N-terminus, the 431-residue chain is tRNA(Ile)-lysidine synthase (431 aa).

19 to 24 (STGIDS) is a binding site for ATP.

Belongs to the tRNA(Ile)-lysidine synthase family.

It is found in the cytoplasm. The enzyme catalyses cytidine(34) in tRNA(Ile2) + L-lysine + ATP = lysidine(34) in tRNA(Ile2) + AMP + diphosphate + H(+). Functionally, ligates lysine onto the cytidine present at position 34 of the AUA codon-specific tRNA(Ile) that contains the anticodon CAU, in an ATP-dependent manner. Cytidine is converted to lysidine, thus changing the amino acid specificity of the tRNA from methionine to isoleucine. The sequence is that of tRNA(Ile)-lysidine synthase from Staphylococcus aureus (strain MRSA252).